Consider the following 426-residue polypeptide: Glutamyl-tRNA reductase (426 aa).

Substrate contacts are provided by residues 49–52 (TCNR), Ser110, 115–117 (EAQ), and Gln121. Residue Cys50 is the Nucleophile of the active site. An NADP(+)-binding site is contributed by 191–196 (GAGEMA).

It belongs to the glutamyl-tRNA reductase family. In terms of assembly, homodimer.

It carries out the reaction (S)-4-amino-5-oxopentanoate + tRNA(Glu) + NADP(+) = L-glutamyl-tRNA(Glu) + NADPH + H(+). It participates in porphyrin-containing compound metabolism; protoporphyrin-IX biosynthesis; 5-aminolevulinate from L-glutamyl-tRNA(Glu): step 1/2. Its function is as follows. Catalyzes the NADPH-dependent reduction of glutamyl-tRNA(Glu) to glutamate 1-semialdehyde (GSA). The chain is Glutamyl-tRNA reductase from Rhodopirellula baltica (strain DSM 10527 / NCIMB 13988 / SH1).